The following is a 156-amino-acid chain: Small ribosomal subunit protein uS7 (156 aa).

It belongs to the universal ribosomal protein uS7 family. As to quaternary structure, part of the 30S ribosomal subunit. Contacts proteins S9 and S11.

One of the primary rRNA binding proteins, it binds directly to 16S rRNA where it nucleates assembly of the head domain of the 30S subunit. Is located at the subunit interface close to the decoding center, probably blocks exit of the E-site tRNA. The polypeptide is Small ribosomal subunit protein uS7 (Streptococcus sanguinis (strain SK36)).